The primary structure comprises 196 residues: DnaA initiator-associating protein DiaA (196 aa).

The region spanning 34–196 (MVQSLLNGNK…DNTLFPHQDD (163 aa)) is the SIS domain.

This sequence belongs to the SIS family. DiaA subfamily. In terms of assembly, homotetramer; dimer of dimers.

Functionally, required for the timely initiation of chromosomal replication via direct interactions with the DnaA initiator protein. The sequence is that of DnaA initiator-associating protein DiaA from Photorhabdus laumondii subsp. laumondii (strain DSM 15139 / CIP 105565 / TT01) (Photorhabdus luminescens subsp. laumondii).